Here is a 404-residue protein sequence, read N- to C-terminus: Phosphoglycerate kinase (404 aa).

Residues 22–24 (DLN), R37, 60–63 (HLGR), R119, and R156 each bind substrate. Residues K206, G302, E333, and 359–362 (GGDS) each bind ATP.

The protein belongs to the phosphoglycerate kinase family. Monomer.

It localises to the cytoplasm. The enzyme catalyses (2R)-3-phosphoglycerate + ATP = (2R)-3-phospho-glyceroyl phosphate + ADP. Its pathway is carbohydrate degradation; glycolysis; pyruvate from D-glyceraldehyde 3-phosphate: step 2/5. This is Phosphoglycerate kinase from Clavibacter sepedonicus (Clavibacter michiganensis subsp. sepedonicus).